Consider the following 80-residue polypeptide: NADH-ubiquinone oxidoreductase chain 5 (80 aa).

The next 2 helical transmembrane spans lie at 4–24 (ISFL…LNFM) and 44–64 (IVMT…VLLI).

This sequence belongs to the complex I subunit 5 family.

The protein resides in the mitochondrion inner membrane. It catalyses the reaction a ubiquinone + NADH + 5 H(+)(in) = a ubiquinol + NAD(+) + 4 H(+)(out). Functionally, core subunit of the mitochondrial membrane respiratory chain NADH dehydrogenase (Complex I) that is believed to belong to the minimal assembly required for catalysis. Complex I functions in the transfer of electrons from NADH to the respiratory chain. The immediate electron acceptor for the enzyme is believed to be ubiquinone. The sequence is that of NADH-ubiquinone oxidoreductase chain 5 (ND5) from Ceratitis capitata (Mediterranean fruit fly).